Here is a 238-residue protein sequence, read N- to C-terminus: Orotidine 5'-phosphate decarboxylase (238 aa).

Residues Asp10, Lys32, Asp59–Thr68, Thr122, Arg184, Gln193, Gly213, and Arg214 each bind substrate. Lys61 acts as the Proton donor in catalysis.

It belongs to the OMP decarboxylase family. Type 1 subfamily. In terms of assembly, homodimer.

It catalyses the reaction orotidine 5'-phosphate + H(+) = UMP + CO2. It functions in the pathway pyrimidine metabolism; UMP biosynthesis via de novo pathway; UMP from orotate: step 2/2. Catalyzes the decarboxylation of orotidine 5'-monophosphate (OMP) to uridine 5'-monophosphate (UMP). The polypeptide is Orotidine 5'-phosphate decarboxylase (Bacillus mycoides (strain KBAB4) (Bacillus weihenstephanensis)).